We begin with the raw amino-acid sequence, 63 residues long: Cecropin-A1 (63 aa).

The first 19 residues, 1 to 19, serve as a signal peptide directing secretion; sequence MNFYNIFVFVALILAITIG. An Arginine amide modification is found at arginine 62.

This sequence belongs to the cecropin family.

It is found in the secreted. In terms of biological role, cecropins have lytic and antibacterial activity against several Gram-positive and Gram-negative bacteria. This is Cecropin-A1 (CecA1) from Drosophila simulans (Fruit fly).